The chain runs to 254 residues: tRNA (guanine-N(1)-)-methyltransferase (254 aa).

S-adenosyl-L-methionine is bound by residues G114 and 134 to 139 (IGDYVL).

It belongs to the RNA methyltransferase TrmD family. As to quaternary structure, homodimer.

The protein localises to the cytoplasm. It carries out the reaction guanosine(37) in tRNA + S-adenosyl-L-methionine = N(1)-methylguanosine(37) in tRNA + S-adenosyl-L-homocysteine + H(+). Functionally, specifically methylates guanosine-37 in various tRNAs. This Desulforamulus reducens (strain ATCC BAA-1160 / DSM 100696 / MI-1) (Desulfotomaculum reducens) protein is tRNA (guanine-N(1)-)-methyltransferase.